Consider the following 370-residue polypeptide: Cytochrome b (370 aa).

4 helical membrane passes run 25 to 45 (FGSMLLACLTLQLLTGFFLAV), 69 to 90 (WMMQNLHAIGASMFFICIYIHI), 105 to 125 (WFSGTTLLIMLMATAFFGYVL), and 170 to 190 (FFALHFILPFGIISLSSLHIL). Heme b contacts are provided by His75 and His89. Positions 174 and 188 each coordinate heme b. His193 is an a ubiquinone binding site. Helical transmembrane passes span 218 to 238 (YKDMLMLTIMTIMLLTIVSFF), 280 to 300 (LGGALALTMSIMMLLTLPFTH), 312 to 332 (FMQLTFWTFTATFLVISWTAT), and 339 to 358 (FTTISQVAALMYFLFFISNP).

The protein belongs to the cytochrome b family. As to quaternary structure, the cytochrome bc1 complex contains 3 respiratory subunits (MT-CYB, CYC1 and UQCRFS1), 2 core proteins (UQCRC1 and UQCRC2) and probably 6 low-molecular weight proteins. The cofactor is heme b.

The protein localises to the mitochondrion inner membrane. Component of the ubiquinol-cytochrome c reductase complex (complex III or cytochrome b-c1 complex) that is part of the mitochondrial respiratory chain. The b-c1 complex mediates electron transfer from ubiquinol to cytochrome c. Contributes to the generation of a proton gradient across the mitochondrial membrane that is then used for ATP synthesis. This is Cytochrome b (MT-CYB) from Chilabothrus strigilatus mccraniei (Ragged Island boa constrictor).